The sequence spans 54 residues: uncharacterized protein (54 aa).

Positions 1–23 are cleaved as a signal peptide; that stretch reads MKELIFFLLIIVILFVVFMVVSS.

This is an uncharacterized protein from Acheta domesticus (House cricket).